The chain runs to 149 residues: MSTPIAIDINKILKLLPHRYPFLLVDRVLEISPRESITALKNVTMNEPFFQGHFPGFPMMPGVLIIEALAQTAALLTFSDERAEDAIYYFAGIDGARFKKPVLPGDQLIMTAKLERDRAGIYKFAVQATADGEIAAEANITCAVRTKGA.

The active site involves His-53.

This sequence belongs to the thioester dehydratase family. FabZ subfamily.

The protein resides in the cytoplasm. It carries out the reaction a (3R)-hydroxyacyl-[ACP] = a (2E)-enoyl-[ACP] + H2O. Involved in unsaturated fatty acids biosynthesis. Catalyzes the dehydration of short chain beta-hydroxyacyl-ACPs and long chain saturated and unsaturated beta-hydroxyacyl-ACPs. The protein is 3-hydroxyacyl-[acyl-carrier-protein] dehydratase FabZ of Polynucleobacter necessarius subsp. necessarius (strain STIR1).